The chain runs to 462 residues: Sugar transporter ERD6-like 12 (462 aa).

The next 12 membrane-spanning stretches (helical) occupy residues Leu-25–Gly-45, Leu-62–Phe-82, Leu-101–Met-121, Phe-124–Ile-144, Gly-151–Phe-171, Thr-179–Pro-199, Leu-262–Ser-282, Ile-297–Val-317, Leu-326–Val-346, Ile-358–Leu-378, Val-399–Val-419, and Gly-424–Val-444.

Belongs to the major facilitator superfamily. Sugar transporter (TC 2.A.1.1) family.

The protein localises to the membrane. Functionally, sugar transporter. This is Sugar transporter ERD6-like 12 (SUGTL5) from Arabidopsis thaliana (Mouse-ear cress).